The primary structure comprises 360 residues: Phospho-N-acetylmuramoyl-pentapeptide-transferase (360 aa).

Transmembrane regions (helical) follow at residues 21 to 41 (YVTF…LWWG), 74 to 94 (MGGL…GDLG), 97 to 117 (YVWV…IDDY), 134 to 154 (YILQ…SAGS), 168 to 188 (VMPQ…VGSS), 199 to 219 (GLAI…AYLS), 236 to 256 (SGEL…FLWF), 263 to 283 (VFMG…IAVL), 288 to 308 (ILLV…ILQV), and 338 to 358 (VIVR…ATLK).

Belongs to the glycosyltransferase 4 family. MraY subfamily. The cofactor is Mg(2+).

The protein resides in the cell inner membrane. It carries out the reaction UDP-N-acetyl-alpha-D-muramoyl-L-alanyl-gamma-D-glutamyl-meso-2,6-diaminopimeloyl-D-alanyl-D-alanine + di-trans,octa-cis-undecaprenyl phosphate = di-trans,octa-cis-undecaprenyl diphospho-N-acetyl-alpha-D-muramoyl-L-alanyl-D-glutamyl-meso-2,6-diaminopimeloyl-D-alanyl-D-alanine + UMP. It participates in cell wall biogenesis; peptidoglycan biosynthesis. Catalyzes the initial step of the lipid cycle reactions in the biosynthesis of the cell wall peptidoglycan: transfers peptidoglycan precursor phospho-MurNAc-pentapeptide from UDP-MurNAc-pentapeptide onto the lipid carrier undecaprenyl phosphate, yielding undecaprenyl-pyrophosphoryl-MurNAc-pentapeptide, known as lipid I. The protein is Phospho-N-acetylmuramoyl-pentapeptide-transferase of Shewanella loihica (strain ATCC BAA-1088 / PV-4).